Consider the following 134-residue polypeptide: Arsenate reductase 1 (134 aa).

Residues Cys-11, Cys-83, and Cys-90 each act as nucleophile in the active site. Disulfide bonds link Cys-11/Cys-83 and Cys-83/Cys-90.

This sequence belongs to the low molecular weight phosphotyrosine protein phosphatase family. Thioredoxin-coupled ArsC subfamily.

Its subcellular location is the cytoplasm. The catalysed reaction is arsenate + [thioredoxin]-dithiol + H(+) = arsenite + [thioredoxin]-disulfide + H2O. Its function is as follows. Catalyzes the reduction of arsenate [As(V)] to arsenite [As(III)]. The chain is Arsenate reductase 1 from Bacillus cereus (strain ATCC 10987 / NRS 248).